The following is a 281-amino-acid chain: Digeranylgeranylglyceryl phosphate synthase (281 aa).

A run of 7 helical transmembrane segments spans residues 14–34, 38–58, 95–115, 149–169, 207–227, 235–255, and 259–279; these read AMAA…LSSA, VSLS…VTGA, LFLF…CGII, FLFG…VLFL, ASYI…VPYL, YLFV…QILG, and AARS…SFIV.

Belongs to the UbiA prenyltransferase family. DGGGP synthase subfamily. The cofactor is Mg(2+).

The protein resides in the cell membrane. The catalysed reaction is sn-3-O-(geranylgeranyl)glycerol 1-phosphate + (2E,6E,10E)-geranylgeranyl diphosphate = 2,3-bis-O-(geranylgeranyl)-sn-glycerol 1-phosphate + diphosphate. The protein operates within membrane lipid metabolism; glycerophospholipid metabolism. In terms of biological role, prenyltransferase that catalyzes the transfer of the geranylgeranyl moiety of geranylgeranyl diphosphate (GGPP) to the C2 hydroxyl of (S)-3-O-geranylgeranylglyceryl phosphate (GGGP). This reaction is the second ether-bond-formation step in the biosynthesis of archaeal membrane lipids. This chain is Digeranylgeranylglyceryl phosphate synthase, found in Methanococcoides burtonii (strain DSM 6242 / NBRC 107633 / OCM 468 / ACE-M).